The following is a 94-amino-acid chain: DASH complex subunit DAD5 (94 aa).

Over residues 1–20 (MRRSTIVPTSRTSSSSPSPS) the composition is skewed to low complexity. Positions 1–25 (MRRSTIVPTSRTSSSSPSPSQMKSF) are disordered.

The protein belongs to the DASH complex HSK3 family. In terms of assembly, component of the DASH complex consisting of ask1, dad1, dad2, dad3, dad4, dam1, duo1, dad5, spc19 and spc34, with a stoichiometry of one copy of each subunit per complex. Multiple DASH complexes oligomerize to form a ring that encircles spindle microtubules and organizes the rod-like NDC80 complexes of the outer kinetochore. DASH complex oligomerization strengthens microtubule attachments. On cytoplasmic microtubules, DASH complexes appear to form patches instead of rings.

The protein localises to the nucleus. It is found in the cytoplasm. Its subcellular location is the cytoskeleton. It localises to the spindle. The protein resides in the chromosome. The protein localises to the centromere. It is found in the kinetochore. Component of the DASH complex that connects microtubules with kinetochores and couples microtubule depolymerisation to chromosome movement; it is involved in retrieving kinetochores to the spindle poles before their re-orientation on the spindle in early mitosis and allows microtubule depolymerization to pull chromosomes apart and resist detachment during anaphase. Kinetochores, consisting of a centromere-associated inner segment and a microtubule-contacting outer segment, play a crucial role in chromosome segregation by mediating the physical connection between centromeric DNA and microtubules. Kinetochores also serve as an input point for the spindle assembly checkpoint, which delays anaphase until all chromosomes have bioriented on the mitotic spindle. The DASH complex mediates bipolar kinetochore-microtubule attachments and facilitates the formation of additional interactions between outer kinetochore components and spindle microtubules. During chromosome movement along the microtubule, it is required both for the sliding of kinetochores along the lateral side of the microtubule and also for microtubule end-on pulling on the kinetochore. Modulates cytoplasmic microtubule dynamics by tracking the plus-end of shortening microtubules and slowing their depolymerization. This Schizosaccharomyces pombe (strain 972 / ATCC 24843) (Fission yeast) protein is DASH complex subunit DAD5.